Consider the following 295-residue polypeptide: UDP-N-acetylenolpyruvoylglucosamine reductase (295 aa).

The 165-residue stretch at 24–188 (KVGGNAEIFF…LKAIFKANKG (165 aa)) folds into the FAD-binding PCMH-type domain. The active site involves Arg168. The active-site Proton donor is the Ser217. The active site involves Glu287.

It belongs to the MurB family. The cofactor is FAD.

It localises to the cytoplasm. The enzyme catalyses UDP-N-acetyl-alpha-D-muramate + NADP(+) = UDP-N-acetyl-3-O-(1-carboxyvinyl)-alpha-D-glucosamine + NADPH + H(+). The protein operates within cell wall biogenesis; peptidoglycan biosynthesis. Functionally, cell wall formation. This chain is UDP-N-acetylenolpyruvoylglucosamine reductase, found in Rickettsia typhi (strain ATCC VR-144 / Wilmington).